The chain runs to 517 residues: Tyrosine-protein kinase Fgr (517 aa).

Residue G2 is the site of N-myristoyl glycine attachment. 2 S-palmitoyl cysteine lipidation sites follow: C3 and C6. Residues 17–33 (VGLEGDFRSQGAEERYY) show a composition bias toward basic and acidic residues. A disordered region spans residues 17–46 (VGLEGDFRSQGAEERYYPDPTQGRSSSISP). Y32 is modified (phosphotyrosine). S50 is modified (phosphoserine). Residues 65–126 (TGVTIFVALY…PSNYVAPVDS (62 aa)) enclose the SH3 domain. The SH2 domain maps to 132–229 (WYFGKISRKD…GLCYLLTAPC (98 aa)). Y196 carries the phosphotyrosine modification. At S206 the chain carries Phosphoserine. The 254-residue stretch at 251–504 (IALDRRLGTG…YLQSFLEDYF (254 aa)) folds into the Protein kinase domain. ATP is bound by residues 257-265 (LGTGCFGDV) and K279. D370 serves as the catalytic Proton acceptor. The residue at position 400 (Y400) is a Phosphotyrosine; by autocatalysis. The residue at position 511 (Y511) is a Phosphotyrosine; by SRC.

This sequence belongs to the protein kinase superfamily. Tyr protein kinase family. SRC subfamily. In terms of assembly, interacts with ITGB1, ITGB2, MS4A2/FCER1B and FCGR2. Interacts (via SH2 domain) with SYK (tyrosine phosphorylated). Interacts (via SH2 domain) with FLT3 (tyrosine phosphorylated). Interacts with PTK2/FAK1. Interacts (via SH2 domain) with HCLS1 (tyrosine phosphorylated by SYK). Interacts with SIRPA and PTPNS1. Interacts (not phosphorylated on tyrosine residues) with CBL; FGR tyrosine phosphorylation promotes dissociation. Interacts with CLNK. In terms of processing, ubiquitinated. Becomes ubiquitinated in response to ITGB2 signaling; this does not lead to degradation. Post-translationally, phosphorylated. Autophosphorylated on tyrosine residues. Becomes phosphorylated in response to FCGR2 engagement, cell adhesion and signaling by ITGB2. Prior phosphorylation at Tyr-511 by SRC inhibits ulterior autophosphorylation at Tyr-400. In terms of tissue distribution, detected in brain cortex (at protein level).

Its subcellular location is the cell membrane. It localises to the cell projection. It is found in the ruffle membrane. The protein resides in the cytoplasm. The protein localises to the cytosol. Its subcellular location is the cytoskeleton. It localises to the mitochondrion inner membrane. It is found in the mitochondrion intermembrane space. The enzyme catalyses L-tyrosyl-[protein] + ATP = O-phospho-L-tyrosyl-[protein] + ADP + H(+). Activated by autophosphorylation. Prior phosphorylation at Tyr-511 by SRC inhibits ulterior autophosphorylation at Tyr-400. Activated by phorbol myristate acetate, phosphatidic acid and poly-Lys. Binding (via SH2 domain) of HCLS1 that is already phosphorylated by SYK strongly increases kinase activity. Its function is as follows. Non-receptor tyrosine-protein kinase that transmits signals from cell surface receptors devoid of kinase activity and contributes to the regulation of immune responses, including neutrophil, monocyte, macrophage and mast cell functions, cytoskeleton remodeling in response to extracellular stimuli, phagocytosis, cell adhesion and migration. Promotes mast cell degranulation, release of inflammatory cytokines and IgE-mediated anaphylaxis. Acts downstream of receptors that bind the Fc region of immunoglobulins, such as MS4A2/FCER1B, FCER1G and FCGR2. Acts downstream of ITGB1 and ITGB2, and regulates actin cytoskeleton reorganization, cell spreading and adhesion. Depending on the context, activates or inhibits cellular responses. Functions as a negative regulator of ITGB2 signaling, phagocytosis and SYK activity in monocytes. Required for normal ITGB1 and ITGB2 signaling, normal cell spreading and adhesion in neutrophils and macrophages. Functions as a positive regulator of cell migration and regulates cytoskeleton reorganization via RAC1 activation. Phosphorylates SYK (in vitro) and promotes SYK-dependent activation of AKT1 and MAP kinase signaling. Phosphorylates PLD2 in antigen-stimulated mast cells, leading to PLD2 activation and the production of the signaling molecules lysophosphatidic acid and diacylglycerol. Promotes activation of PIK3R1. Phosphorylates FASLG, and thereby regulates its ubiquitination and subsequent internalization. Phosphorylates ABL1. Promotes phosphorylation of CBL, CTTN, PIK3R1, PTK2/FAK1, PTK2B/PYK2 and VAV2. Phosphorylates HCLS1 that has already been phosphorylated by SYK, but not unphosphorylated HCLS1. Together with CLNK, it acts as a negative regulator of natural killer cell-activating receptors and inhibits interferon-gamma production. In Rattus norvegicus (Rat), this protein is Tyrosine-protein kinase Fgr (Fgr).